The primary structure comprises 416 residues: Leu/Ile/Val-binding protein homolog 4 (416 aa).

Positions 1-26 (MSLKVFLQAGVACAALSLAGAAGASA) are cleaved as a signal peptide.

It belongs to the leucine-binding protein family.

Functionally, component of an amino-acid transport system. The protein is Leu/Ile/Val-binding protein homolog 4 of Brucella abortus (strain 2308).